Consider the following 130-residue polypeptide: uncharacterized protein (130 aa).

The first 26 residues, 1 to 26 (MINNFKGILIIILSFLFLLLFKYSNA), serve as a signal peptide directing secretion. Asn-58 carries N-linked (GlcNAc...) asparagine glycosylation.

It belongs to the Dictyostelium gerABC family.

It localises to the secreted. This is an uncharacterized protein from Dictyostelium discoideum (Social amoeba).